A 117-amino-acid polypeptide reads, in one-letter code: Acylphosphatase (117 aa).

Residues 31–117 enclose the Acylphosphatase-like domain; that stretch reads RWRWIIQGQV…RGDDWFEVRY (87 aa). Residues R46 and N64 contribute to the active site.

This sequence belongs to the acylphosphatase family.

The enzyme catalyses an acyl phosphate + H2O = a carboxylate + phosphate + H(+). This Synechococcus sp. (strain CC9902) protein is Acylphosphatase (acyP).